The sequence spans 206 residues: Large ribosomal subunit protein bL25 (206 aa).

The tract at residues 184-206 is disordered; it reads AEEAAAEVAEPEVIKKGKEEEEE. Residues 195–206 are compositionally biased toward basic and acidic residues; sequence EVIKKGKEEEEE.

Belongs to the bacterial ribosomal protein bL25 family. CTC subfamily. As to quaternary structure, part of the 50S ribosomal subunit; part of the 5S rRNA/L5/L18/L25 subcomplex. Contacts the 5S rRNA. Binds to the 5S rRNA independently of L5 and L18.

Functionally, this is one of the proteins that binds to the 5S RNA in the ribosome where it forms part of the central protuberance. This chain is Large ribosomal subunit protein bL25, found in Thermus thermophilus (strain ATCC BAA-163 / DSM 7039 / HB27).